Here is a 570-residue protein sequence, read N- to C-terminus: Enhancer of polycomb-like protein 1 (570 aa).

The tract at residues 541–570 (ALNNLNSGQTSGQTMGSNPGPGAIAPTPET) is disordered. Positions 543-557 (NNLNSGQTSGQTMGS) are enriched in polar residues.

Belongs to the enhancer of polycomb family. In terms of assembly, component of the NuA4 histone acetyltransferase complex.

It localises to the nucleus. Component of the NuA4 histone acetyltransferase complex which is involved in transcriptional activation of selected genes principally by acetylation of nucleosomal histone H4 and H2A. The NuA4 complex is also involved in DNA repair. Involved in gene silencing by neighboring heterochromatin, blockage of the silencing spreading along the chromosome, and required for cell cycle progression through G2/M. The polypeptide is Enhancer of polycomb-like protein 1 (epl1) (Emericella nidulans (strain FGSC A4 / ATCC 38163 / CBS 112.46 / NRRL 194 / M139) (Aspergillus nidulans)).